Here is a 457-residue protein sequence, read N- to C-terminus: tRNA-2-methylthio-N(6)-dimethylallyladenosine synthase (457 aa).

The MTTase N-terminal domain occupies 3–120 (KKVYVKTFGC…LPQMIDQRRA (118 aa)). Positions 12, 49, 83, 157, 161, and 164 each coordinate [4Fe-4S] cluster. One can recognise a Radical SAM core domain in the interval 143-377 (RVEGPSAFVS…QATIEENVAR (235 aa)). The TRAM domain maps to 380–447 (RSMVGKVERI…PHSLRGELLL (68 aa)).

It belongs to the methylthiotransferase family. MiaB subfamily. In terms of assembly, monomer. [4Fe-4S] cluster serves as cofactor.

Its subcellular location is the cytoplasm. It catalyses the reaction N(6)-dimethylallyladenosine(37) in tRNA + (sulfur carrier)-SH + AH2 + 2 S-adenosyl-L-methionine = 2-methylsulfanyl-N(6)-dimethylallyladenosine(37) in tRNA + (sulfur carrier)-H + 5'-deoxyadenosine + L-methionine + A + S-adenosyl-L-homocysteine + 2 H(+). Its function is as follows. Catalyzes the methylthiolation of N6-(dimethylallyl)adenosine (i(6)A), leading to the formation of 2-methylthio-N6-(dimethylallyl)adenosine (ms(2)i(6)A) at position 37 in tRNAs that read codons beginning with uridine. This is tRNA-2-methylthio-N(6)-dimethylallyladenosine synthase from Burkholderia ambifaria (strain ATCC BAA-244 / DSM 16087 / CCUG 44356 / LMG 19182 / AMMD) (Burkholderia cepacia (strain AMMD)).